The primary structure comprises 306 residues: UDP-3-O-acyl-N-acetylglucosamine deacetylase (306 aa).

Residues His-79, His-238, and Asp-242 each coordinate Zn(2+). His-265 serves as the catalytic Proton donor.

This sequence belongs to the LpxC family. Requires Zn(2+) as cofactor.

The enzyme catalyses a UDP-3-O-[(3R)-3-hydroxyacyl]-N-acetyl-alpha-D-glucosamine + H2O = a UDP-3-O-[(3R)-3-hydroxyacyl]-alpha-D-glucosamine + acetate. Its pathway is glycolipid biosynthesis; lipid IV(A) biosynthesis; lipid IV(A) from (3R)-3-hydroxytetradecanoyl-[acyl-carrier-protein] and UDP-N-acetyl-alpha-D-glucosamine: step 2/6. In terms of biological role, catalyzes the hydrolysis of UDP-3-O-myristoyl-N-acetylglucosamine to form UDP-3-O-myristoylglucosamine and acetate, the committed step in lipid A biosynthesis. The protein is UDP-3-O-acyl-N-acetylglucosamine deacetylase of Shewanella violacea (strain JCM 10179 / CIP 106290 / LMG 19151 / DSS12).